The primary structure comprises 489 residues: Glycogen synthase (489 aa).

R20 lines the ADP-alpha-D-glucose pocket.

This sequence belongs to the glycosyltransferase 1 family. Bacterial/plant glycogen synthase subfamily.

The catalysed reaction is [(1-&gt;4)-alpha-D-glucosyl](n) + ADP-alpha-D-glucose = [(1-&gt;4)-alpha-D-glucosyl](n+1) + ADP + H(+). It functions in the pathway glycan biosynthesis; glycogen biosynthesis. Its function is as follows. Synthesizes alpha-1,4-glucan chains using ADP-glucose. The sequence is that of Glycogen synthase from Chlorobium luteolum (strain DSM 273 / BCRC 81028 / 2530) (Pelodictyon luteolum).